We begin with the raw amino-acid sequence, 358 residues long: Ribosomal RNA large subunit methyltransferase M (358 aa).

Residues serine 191, 224–227 (APGG), aspartate 243, aspartate 263, and aspartate 279 each bind S-adenosyl-L-methionine. The active-site Proton acceptor is the lysine 308.

Belongs to the class I-like SAM-binding methyltransferase superfamily. RNA methyltransferase RlmE family. RlmM subfamily. In terms of assembly, monomer.

The protein resides in the cytoplasm. It catalyses the reaction cytidine(2498) in 23S rRNA + S-adenosyl-L-methionine = 2'-O-methylcytidine(2498) in 23S rRNA + S-adenosyl-L-homocysteine + H(+). Its function is as follows. Catalyzes the 2'-O-methylation at nucleotide C2498 in 23S rRNA. This is Ribosomal RNA large subunit methyltransferase M from Marinobacter nauticus (strain ATCC 700491 / DSM 11845 / VT8) (Marinobacter aquaeolei).